Consider the following 703-residue polypeptide: Elongation factor G (703 aa).

The tr-type G domain occupies 7 to 287 (KFTRNIGIAA…AVMRYLPSPA (281 aa)). Residues 16-23 (AHIDAGKT), 84-88 (DTPGH), and 138-141 (NKMD) contribute to the GTP site.

The protein belongs to the TRAFAC class translation factor GTPase superfamily. Classic translation factor GTPase family. EF-G/EF-2 subfamily.

It localises to the cytoplasm. Its function is as follows. Catalyzes the GTP-dependent ribosomal translocation step during translation elongation. During this step, the ribosome changes from the pre-translocational (PRE) to the post-translocational (POST) state as the newly formed A-site-bound peptidyl-tRNA and P-site-bound deacylated tRNA move to the P and E sites, respectively. Catalyzes the coordinated movement of the two tRNA molecules, the mRNA and conformational changes in the ribosome. The sequence is that of Elongation factor G from Christiangramia forsetii (strain DSM 17595 / CGMCC 1.15422 / KT0803) (Gramella forsetii).